We begin with the raw amino-acid sequence, 980 residues long: Serine/threonine-protein phosphatase 4 regulatory subunit 3 (980 aa).

Residues 1-105 (MTTDTRRRVK…EKICQVQGKD (105 aa)) enclose the WH1 domain. 3 disordered regions span residues 640 to 668 (RDKM…RQME), 695 to 861 (VSEK…SLCD), and 885 to 980 (VTAA…ARQA). The segment covering 695–708 (VSEKNGPQTQNQQK) has biased composition (polar residues). Composition is skewed to low complexity over residues 709–749 (SSPP…SSSP), 757–789 (QTQA…QQTQ), 803–859 (EAPQ…AASL), and 885–926 (VTAA…SPAS). A compositionally biased stretch (polar residues) spans 929 to 939 (QDANSTEGTSS). The segment covering 940–951 (EADKTTAKKGLV) has biased composition (basic and acidic residues). Residues 953-968 (YESDSGEDDYEEDEYS) are compositionally biased toward acidic residues.

It belongs to the SMEK family. Serine/threonine-protein phosphatase 4 (PP4) occurs in different assemblies of the catalytic and one or more regulatory subunits. Probably part of a PP4 PPP4C-PPP4R2-PPP4R3 complex containing Pp4-19C, PPP4R2r and flfl. Interacts with mira. Expressed in neuroblasts.

It is found in the nucleus. Its subcellular location is the membrane. The protein localises to the cytoplasm. Its function is as follows. Regulatory subunit of serine/threonine-protein phosphatase 4. The probable PP4 complex Pp4-19C-PPP4R2r-flfl (PPP4C-PPP4R2-PPP4R3) is required to prevent caspase induced cell death (in vitro). May be involved in DNA damage repair. Key mediator specific for the localization of mira and associated cell fate determinants during both interphase and mitosis. Nuclear Flfl is required to exclude mira/pros from the nucleus when inefficiently bound to the cytoskeleton/cortex, whereas cytosolic or membrane-associated flfl is required for the cortical association and asymmetric localization of mira/pros/brat/stau at metaphase and anaphase. In Drosophila melanogaster (Fruit fly), this protein is Serine/threonine-protein phosphatase 4 regulatory subunit 3 (flfl).